The primary structure comprises 327 residues: ATPase ASNA1 homolog (327 aa).

26-33 (KGGVGKTT) serves as a coordination point for ATP. Residue aspartate 57 is part of the active site. Positions 238 and 265 each coordinate ATP. Positions 274 and 277 each coordinate Zn(2+).

It belongs to the arsA ATPase family. Homodimer.

Its subcellular location is the cytoplasm. It is found in the endoplasmic reticulum. Functionally, ATPase required for the post-translational delivery of tail-anchored (TA) proteins to the endoplasmic reticulum. Recognizes and selectively binds the transmembrane domain of TA proteins in the cytosol. This complex then targets to the endoplasmic reticulum by membrane-bound receptors, where the tail-anchored protein is released for insertion. This process is regulated by ATP binding and hydrolysis. ATP binding drives the homodimer towards the closed dimer state, facilitating recognition of newly synthesized TA membrane proteins. ATP hydrolysis is required for insertion. Subsequently, the homodimer reverts towards the open dimer state, lowering its affinity for the membrane-bound receptor, and returning it to the cytosol to initiate a new round of targeting. The protein is ATPase ASNA1 homolog of Entamoeba dispar (strain ATCC PRA-260 / SAW760).